We begin with the raw amino-acid sequence, 507 residues long: ATP synthase subunit alpha, chloroplastic (507 aa).

170–177 contributes to the ATP binding site; the sequence is GDRQTGKT. Phosphothreonine is present on Thr257.

Belongs to the ATPase alpha/beta chains family. F-type ATPases have 2 components, CF(1) - the catalytic core - and CF(0) - the membrane proton channel. CF(1) has five subunits: alpha(3), beta(3), gamma(1), delta(1), epsilon(1). CF(0) has four main subunits: a, b, b' and c.

The protein resides in the plastid. It localises to the chloroplast thylakoid membrane. It catalyses the reaction ATP + H2O + 4 H(+)(in) = ADP + phosphate + 5 H(+)(out). Produces ATP from ADP in the presence of a proton gradient across the membrane. The alpha chain is a regulatory subunit. The protein is ATP synthase subunit alpha, chloroplastic of Barbarea verna (Land cress).